We begin with the raw amino-acid sequence, 162 residues long: Caveolin-2 (162 aa).

The Cytoplasmic segment spans residues 1 to 86 (MGLETEKADV…FEMSKYVIYK (86 aa)). Phosphotyrosine; by SRC is present on tyrosine 19. Serine 20 and serine 23 each carry phosphoserine. Tyrosine 27 is modified (phosphotyrosine; by SRC). The segment at residues 87–107 (FLTVFLAIPLAFAAGILFATL) is an intramembrane region (helical). At 108–162 (SCLHIWIIMPFVKTCLMVLPSVQTIWKSVTDVVIAPLCTSIGRSFSSVSLQLSHD) the chain is on the cytoplasmic side.

Belongs to the caveolin family. Monomer or homodimer. Interacts with CAV1; the interaction forms a stable heterooligomeric complex that is required for targeting to lipid rafts and for caveolae formation. Tyrosine phosphorylated forms do not form heterooligomers with the Tyr-19-phosphorylated form existing as a monomer or dimer, and the Tyr-27-form as a monomer only. Interacts (tyrosine phosphorylated form) with the SH2 domain-containing proteins, RASA1, NCK1 and SRC. Interacts (tyrosine phosphorylated form) with INSR, the interaction (Tyr-27-phosphorylated form) is increased on insulin stimulation. Interacts (Tyr-19 phosphorylated form) with MAPK1 (phosphorylated form); the interaction, promoted by insulin, leads to nuclear location and MAPK1 activation. Interacts with STAT3; the interaction is increased on insulin-induced tyrosine phosphorylation leading to STAT activation. Post-translationally, phosphorylated on serine and tyrosine residues. CAV1 promotes phosphorylation on Ser-23 which then targets the complex to the plasma membrane, lipid rafts and caveolae. Phosphorylation on both Tyr-19 and Tyr-27 is required for insulin-induced 'Ser-727' phosphorylation of STAT3 and its activation. Phosphorylation on Tyr-19 is required for insulin-induced phosphorylation of MAPK1 and DNA binding of STAT3. Tyrosine phosphorylation is induced by both EGF and insulin. In terms of tissue distribution, expressed in aortic endothelial cells.

Its subcellular location is the nucleus. The protein resides in the cytoplasm. It is found in the golgi apparatus membrane. It localises to the cell membrane. The protein localises to the membrane. Its subcellular location is the caveola. Its function is as follows. May act as a scaffolding protein within caveolar membranes. Interacts directly with G-protein alpha subunits and can functionally regulate their activity. Acts as an accessory protein in conjunction with CAV1 in targeting to lipid rafts and driving caveolae formation. Positive regulator of cellular mitogenesis of the MAPK signaling pathway. Required for the insulin-stimulated nuclear translocation and activation of MAPK1 and STAT3, and the subsequent regulation of cell cycle progression. The sequence is that of Caveolin-2 (CAV2) from Bos taurus (Bovine).